The following is a 160-amino-acid chain: General odorant-binding protein 2 (160 aa).

A signal peptide spans 1 to 19 (MGYKLLLMYIAIVIDSVIG). 3 disulfides stabilise this stretch: Cys-38–Cys-73, Cys-69–Cys-127, and Cys-116–Cys-136.

Belongs to the PBP/GOBP family. As to expression, antenna.

Its function is as follows. Present in the aqueous fluid surrounding olfactory sensory dendrites and are thought to aid in the capture and transport of hydrophobic odorants into and through this fluid. The chain is General odorant-binding protein 2 from Antheraea pernyi (Chinese oak silk moth).